Here is a 284-residue protein sequence, read N- to C-terminus: Bifunctional protein FolD (284 aa).

Residue 166–168 (GAS) coordinates NADP(+).

Belongs to the tetrahydrofolate dehydrogenase/cyclohydrolase family. As to quaternary structure, homodimer.

The catalysed reaction is (6R)-5,10-methylene-5,6,7,8-tetrahydrofolate + NADP(+) = (6R)-5,10-methenyltetrahydrofolate + NADPH. It carries out the reaction (6R)-5,10-methenyltetrahydrofolate + H2O = (6R)-10-formyltetrahydrofolate + H(+). Its pathway is one-carbon metabolism; tetrahydrofolate interconversion. Its function is as follows. Catalyzes the oxidation of 5,10-methylenetetrahydrofolate to 5,10-methenyltetrahydrofolate and then the hydrolysis of 5,10-methenyltetrahydrofolate to 10-formyltetrahydrofolate. In Legionella pneumophila (strain Paris), this protein is Bifunctional protein FolD.